The chain runs to 791 residues: von Willebrand factor A domain-containing protein 2 (791 aa).

The signal sequence occupies residues 1–23 (MPPLLLLPAIYMLLFFRVSPTIS). The VWFA 1 domain occupies 51–221 (DILFLLDGSH…DATNGLLSTL (171 aa)). The N-linked (GlcNAc...) asparagine glycan is linked to Asn-146. The EGF-like 1 domain occupies 295 to 332 (PGPCDSQPCQNGGTCIPEGVDRYHCLCPLAFGGEVNCA). Disulfide bonds link Cys-298-Cys-309, Cys-303-Cys-319, and Cys-321-Cys-331. 2 VWFA domains span residues 342–516 (DVLF…QRRL) and 530–704 (DLVF…IEWL). Residues 711 to 747 (PVNLCKPSPCMNEGTCVLKNGSYRCECRGGWEGPHCE) enclose the EGF-like 2 domain. 3 disulfide bridges follow: Cys-715–Cys-726, Cys-720–Cys-735, and Cys-737–Cys-746. Residues 762–791 (HQEPAGLQGPTPSQQAPKHLRIGKALSSAK) are disordered.

As to quaternary structure, forms monomers and multimers. Detected in uterus, kidney, and skin. Also detected in intestine and lung of adult mice, and in calvaria, femur, brain, heart, intestine, skeletal muscle, and lung of newborn mice.

The protein localises to the secreted. The sequence is that of von Willebrand factor A domain-containing protein 2 (Vwa2) from Mus musculus (Mouse).